Reading from the N-terminus, the 251-residue chain is Eukaryotic translation initiation factor 4E-3 (251 aa).

The tract at residues 200-251 is disordered; the sequence is DSSARTSSTVKPRICLPAKDPAPVKEKGPAATTSPSNPGTEATGTSPATPTP. Residues 230–251 show a composition bias toward polar residues; it reads ATTSPSNPGTEATGTSPATPTP.

The protein belongs to the eukaryotic initiation factor 4E family. As to quaternary structure, eIF4F is a multi-subunit complex, the composition of which varies with external and internal environmental conditions. It is composed of at least eIF4A, eIF4E and eIF4G. eIF4E is also known to interact with other partners. Interacts with mxt. Component of the pid-1 variant of the PETISCO complex (also called the pid-3, erh-2, tofu-6, and ife-3 small RNA complex) containing at least pid-1, tofu-6, ife-3, pid-3, and erh-2, which is required for the biogenesis of a class of 21 nucleotide PIWI-interacting RNAs (piRNAs) that possess a uracil residue at the 5'-end (also called 21U-RNAs). Component of the tost-1 variant of the PETISCO complex (also called the pid-3, erh-2, tofu-6, and ife-3 small RNA complex) containing at least tost-1, tofu-6, ife-3, pid-3, and erh-2, which plays an essential role in embryogenesis. Within the pid-1 and tost-1 variants of the PETISCO complexes interacts with tofu-6 (via C-terminus). In contrast to the pid-1 variant of the PETISCO complex, the tost-1 variant of the PETISCO complex plays a minor role in the biogenesis of 21U-RNAs. As to expression, highly expressed in the germline (at protein level).

The protein localises to the cytoplasmic granule. Its subcellular location is the cytoplasm. It is found in the perinuclear region. Functionally, recognizes and binds the 7-methylguanosine-containing mRNA cap during an early step in the initiation of protein synthesis and facilitates ribosome binding by inducing the unwinding of the mRNAs secondary structures. All 5 eIF4E proteins bind monomethyl cap structures. Only ife-1, ife-2 and ife-5 bind trimethyl cap structures which result from trans-splicing. Translation of trimethyl cap structure mRNAs may be regulated by intracellular redox state; disulfide bonds change the width and depth of the cap-binding cavity determining selectivity to mRNA caps. Ife-3 is essential for viability. Component of the pid-1 and tost-1 variants of the PETISCO complexes, which have roles in the biogenesis of a class of 21 nucleotide PIWI-interacting RNAs (piRNAs) that possess a uracil residue at the 5'-end (also called 21U-RNAs) and embryogenesis, respectively. Within the pid-1 variant of the PETISCO complex binds to capped 21U-RNA precursor molecules, possibly playing a role in the processing of the 5' end of the molecules to promote binding of other complex components such as pid-3. However, it is not essential for the biogenesis of 21U-RNAs by itself. Within the tost-1 variant of the PETISCO complex binds to splice leader SL1 RNA fragments to possibly play a role in their processing. The chain is Eukaryotic translation initiation factor 4E-3 from Caenorhabditis elegans.